Reading from the N-terminus, the 428-residue chain is MTEIIEVHAREILDSRGNPTVEAEVTLLSGISGRASVPSGASTGEHEMLELRDGDPKRYLGKGVTQAVNNVIEKIAPEIVGMDCLNQRDIDYTMIALDGTENKGALGANAILSVSIACAKAAAAVVELPLYRYLGGVQAKDIPVPMMNIINGGQHADNNVDIQEFMIMPVGAPTFREGLRMSAEVFHNLKAVLKGKGYNTAVGDEGGFAPNLASNEEALAVIMAAITRAGYEPGKDIAIALDAAASSFYEKGKYILAAEKKPEKTADEMIRFYEDLANRYPIISLEDGLAEDDWEGWKALTQAMGSRIQIVGDDLFVTNKKRLEQGISKGIANSILIKLNQIGSLTETLETIQTAKEAGYTNVVSHRSGETEDSFMADVAVAANCGQIKSGSLSRSERLAKYNQLLRIEEELGDRAVYRGRSALYSVR.

Position 163 (glutamine 163) interacts with (2R)-2-phosphoglycerate. Glutamate 205 (proton donor) is an active-site residue. Aspartate 242, glutamate 286, and aspartate 313 together coordinate Mg(2+). (2R)-2-phosphoglycerate contacts are provided by lysine 338, arginine 367, serine 368, and lysine 389. Residue lysine 338 is the Proton acceptor of the active site.

It belongs to the enolase family. Requires Mg(2+) as cofactor.

Its subcellular location is the cytoplasm. The protein resides in the secreted. It is found in the cell surface. It carries out the reaction (2R)-2-phosphoglycerate = phosphoenolpyruvate + H2O. Its pathway is carbohydrate degradation; glycolysis; pyruvate from D-glyceraldehyde 3-phosphate: step 4/5. Its function is as follows. Catalyzes the reversible conversion of 2-phosphoglycerate (2-PG) into phosphoenolpyruvate (PEP). It is essential for the degradation of carbohydrates via glycolysis. The chain is Enolase from Syntrophus aciditrophicus (strain SB).